A 99-amino-acid chain; its full sequence is Class II hydrophobin B (99 aa).

An N-terminal signal peptide occupies residues 1 to 15; that stretch reads MKFFAIAALFAGALA. 2 disulfides stabilise this stretch: Cys30/Cys79 and Cys40/Cys70.

This sequence belongs to the cerato-ulmin hydrophobin family.

It localises to the secreted. Its subcellular location is the cell wall. The protein resides in the vacuole. The protein localises to the cytoplasmic vesicle. Functionally, aerial growth, conidiation, and dispersal of filamentous fungi in the environment rely upon a capability of their secreting small amphipathic proteins called hydrophobins (HPBs) with low sequence identity. Class I can self-assemble into an outermost layer of rodlet bundles on aerial cell surfaces, conferring cellular hydrophobicity that supports fungal growth, development and dispersal; whereas Class II form highly ordered films at water-air interfaces through intermolecular interactions but contribute nothing to the rodlet structure. Hyd2B contributes to certain cell wall-related features, such as hydrophobicity but is not involved in cell wall-related events during fungal proliferation in host hemocoel. Does not contribute to conidial hydrophobicity. Involved in insect hemocoel colonization independent of cell hydrophobicity. This is Class II hydrophobin B from Beauveria bassiana (strain ARSEF 2860) (White muscardine disease fungus).